Reading from the N-terminus, the 301-residue chain is Nucleotide-binding protein Mb1456 (301 aa).

24 to 31 is a binding site for ATP; the sequence is GLSGAGRG. 75-78 is a binding site for GTP; the sequence is DVRS.

The protein belongs to the RapZ-like family.

Its function is as follows. Displays ATPase and GTPase activities. In Mycobacterium bovis (strain ATCC BAA-935 / AF2122/97), this protein is Nucleotide-binding protein Mb1456.